Consider the following 404-residue polypeptide: Synaptic vesicle membrane protein VAT-1 homolog (404 aa).

The segment at 1-55 is disordered; it reads MSAEREATEAATVAAAAEARAETGAGEGAPSQPPTVEVASDPQPPPAPEASASAS. S2 bears the N-acetylserine mark. S2 is modified (phosphoserine). The segment covering 9-24 has biased composition (low complexity); it reads EAATVAAAAEARAETG. Phosphoserine is present on residues S31 and S40.

This sequence belongs to the zinc-containing alcohol dehydrogenase family. Quinone oxidoreductase subfamily. In terms of assembly, interacts with MFN1 and MFN2. As to expression, ubiquitously expressed.

The protein localises to the cytoplasm. It localises to the mitochondrion outer membrane. Plays a part in calcium-regulated keratinocyte activation in epidermal repair mechanisms. Has no effect on cell proliferation. Possesses ATPase activity. May negatively regulate mitochondrial fusion. This is Synaptic vesicle membrane protein VAT-1 homolog (Vat1) from Rattus norvegicus (Rat).